Consider the following 420-residue polypeptide: 3-isopropylmalate dehydratase large subunit (420 aa).

3 residues coordinate [4Fe-4S] cluster: Cys300, Cys360, and Cys363.

It belongs to the aconitase/IPM isomerase family. LeuC type 2 subfamily. In terms of assembly, heterodimer of LeuC and LeuD. Requires [4Fe-4S] cluster as cofactor.

It catalyses the reaction (2R,3S)-3-isopropylmalate = (2S)-2-isopropylmalate. It functions in the pathway amino-acid biosynthesis; L-leucine biosynthesis; L-leucine from 3-methyl-2-oxobutanoate: step 2/4. Functionally, catalyzes the isomerization between 2-isopropylmalate and 3-isopropylmalate, via the formation of 2-isopropylmaleate. The polypeptide is 3-isopropylmalate dehydratase large subunit (Halothermothrix orenii (strain H 168 / OCM 544 / DSM 9562)).